Consider the following 847-residue polypeptide: Beta-galactosidase 1 (847 aa).

The first 32 residues, 1–32, serve as a signal peptide directing secretion; it reads MGSKPNAMKNVVAMAAVSALFLLGFLVCSVSG. Residue Glu-190 is the Proton donor of the active site. Glu-259 acts as the Nucleophile in catalysis. N-linked (GlcNAc...) asparagine glycosylation occurs at Asn-469. An SUEL-type lectin domain is found at 761-847; sequence KPLHPKAHLQ…KKLAVEAVCA (87 aa).

It belongs to the glycosyl hydrolase 35 family. In terms of tissue distribution, ubiquitous, at low levels.

Its subcellular location is the secreted. It is found in the extracellular space. It localises to the apoplast. The enzyme catalyses Hydrolysis of terminal non-reducing beta-D-galactose residues in beta-D-galactosides.. The sequence is that of Beta-galactosidase 1 (BGAL1) from Arabidopsis thaliana (Mouse-ear cress).